We begin with the raw amino-acid sequence, 364 residues long: MAQNVQENEQVMSTEDLLQAQIELYHHCLAFIKSMALRAATDLRIPDAIHCNGGAATLTDLAAHVGLHPTKLSHLRRLMRVLTLSGIFTVHDGDGEATYTLTRVSRLLLSDGVERTHGLSQMVRVFVNPVAVASQFSLHEWFTVEKAAAVSLFEVAHGCTRWEMIANDSKDGSMFNAGMVEDSSVAMDIILRKSSNVFRGINSLVDVGGGYGAVAAAVVRAFPDIKCTVLDLPHIVAKAPSNNNIQFVGGDLFEFIPAADVVLLKCILHCWQHDDCVKIMRRCKEAISARDAGGKVILIEVVVGIGSNETVPKEMQLLFDVFMMYTDGIEREEHEWKKIFLEAGFSDYKIIPVLGVRSIIEVYP.

S-adenosyl-L-homocysteine is bound by residues glycine 208, aspartate 231, aspartate 251, and lysine 265. The Proton acceptor role is filled by histidine 269. Catalysis depends on residues glutamate 300 and glutamate 330.

The protein belongs to the class I-like SAM-binding methyltransferase superfamily. Cation-independent O-methyltransferase family. In terms of assembly, homodimer. In terms of tissue distribution, expressed in leaves, stems and flowers.

It is found in the cytoplasm. The enzyme catalyses N-acetylserotonin + S-adenosyl-L-methionine = melatonin + S-adenosyl-L-homocysteine + H(+). The protein operates within aromatic compound metabolism; melatonin biosynthesis; melatonin from serotonin: step 1/2. Methyltransferase which catalyzes the transfer of a methyl group onto N-acetylserotonin, producing melatonin (N-acetyl-5-methoxytryptamine). The chain is Acetylserotonin O-methyltransferase 1 from Oryza sativa subsp. japonica (Rice).